The primary structure comprises 271 residues: Aquaporin-11 (271 aa).

The Cytoplasmic portion of the chain corresponds to 1–14 (MSALLGLPPEVQDT). A helical membrane pass occupies residues 15-35 (CISLGLMLLVVLFMGLARVIA). Residues 36 to 41 (RQQLHR) are Lumenal-facing. Residues 42 to 62 (PMVHAFVLEFLATFQLCYCTH) traverse the membrane as a helical segment. The Cytoplasmic segment spans residues 63-76 (ELQLLSEQDSGHPT). A helical membrane pass occupies residues 77–97 (WTLTLIYFFSLVHGLTLVGTA). Topologically, residues 98 to 166 (SNPCGVMMQM…NPINTDISKA (69 aa)) are lumenal. The short motif at 99-101 (NPC) is the NPC element. Residues 167–187 (IIIEAICSFIFHSALLHFQEV) form a helical membrane-spanning segment. The Cytoplasmic segment spans residues 188–194 (RTKLRIH). A helical membrane pass occupies residues 195–215 (VLAALITFLAYAGGSLTGALF). Residues 216–218 (NPA) carry the NPA motif. Topologically, residues 216–234 (NPALALSLHFPCFDESFYK) are lumenal. Residues 235 to 255 (FFVVYWVAPSLGVLLMILMFS) traverse the membrane as a helical segment. Residues 256-271 (FFLPWLHNNQLSNKKE) lie on the Cytoplasmic side of the membrane.

It belongs to the MIP/aquaporin (TC 1.A.8) family. AQP11/AQP12 subfamily. As to quaternary structure, homodimer; disulfide-linked. Homotetramer. Can also form homomultimer. Not glycosylated. In terms of tissue distribution, expressed in retina specifically at retinal Mueller glial cells. Expressed in adult testis, in the elongated spermatids (ES) and in residual bodies inside Sertoli cells.

Its subcellular location is the endoplasmic reticulum membrane. It is found in the cytoplasmic vesicle membrane. The protein resides in the cell membrane. The catalysed reaction is H2O(in) = H2O(out). The enzyme catalyses glycerol(in) = glycerol(out). It catalyses the reaction H2O2(out) = H2O2(in). In terms of biological role, channel protein that facilitates the transport of water, glycerol and hydrogen peroxide across membrane of cell or organelles guaranteeing intracellular homeostasis in several organes like liver, kidney and brain. In situation of stress, participates in endoplasmic reticulum (ER) homeostasis by regulating redox homeostasis through the transport of hydrogen peroxide across the endoplasmic reticulum membrane thereby regulating the oxidative stress through the NADPH oxidase 2 pathway. Plays a role by maintaining an environment suitable for translation or protein foldings in the ER lumen namely by participating in the PKD1 glycosylation processing resulting in regulation of PKD1 membrane trafficking thereby preventing the accumulation of unfolding protein in ER. Plays a role in the proximal tubule function by regulating its endosomal acidification. May play a role in postnatal kidney development. This chain is Aquaporin-11, found in Rattus norvegicus (Rat).